Reading from the N-terminus, the 614-residue chain is Deoxynucleoside triphosphate triphosphohydrolase SAMHD1 (614 aa).

The segment covering 1–13 has biased composition (low complexity); it reads MGSPAAGWGAAPA. A disordered region spans residues 1 to 33; the sequence is MGSPAAGWGAAPAKRARREGSAESSCGSPADRD. Residues 37 to 102 form the SAM domain; it reads WDTERLCQHL…LACLNQLRQT (66 aa). Residues lysine 107 and valine 108 each coordinate GTP. Asparagine 110 contributes to the dGTP binding site. Residues aspartate 128, glutamine 133, and arginine 136 each coordinate GTP. Positions 140, 141, 147, and 155 each coordinate dGTP. Glutamine 140 serves as a coordination point for dATP. A dCTP-binding site is contributed by glutamine 140. Glutamine 140 lines the dTTP pocket. Residue arginine 155 coordinates dATP. DCTP is bound at residue arginine 155. DTTP is bound at residue arginine 155. The region spanning 155–307 is the HD domain; that stretch reads RFEHSLGVGY…GIDVDKWDYF (153 aa). Positions 158, 197, and 198 each coordinate Mn(2+). DATP-binding residues include histidine 201 and histidine 206. Residues histidine 201 and histidine 206 each contribute to the dCTP site. The dTTP site is built by histidine 201 and histidine 206. Histidine 224 is an active-site residue. Aspartate 302 is a Mn(2+) binding site. Residues lysine 303, tyrosine 306, aspartate 310, arginine 324, arginine 343, lysine 345, asparagine 349, arginine 357, tyrosine 365, glutamine 366, histidine 367, and lysine 368 each contribute to the dGTP site. Residues lysine 303, tyrosine 306, and aspartate 310 each contribute to the dATP site. 3 residues coordinate dCTP: lysine 303, tyrosine 306, and aspartate 310. DTTP contacts are provided by lysine 303, tyrosine 306, and aspartate 310. Residue arginine 357 coordinates dATP. Arginine 357 provides a ligand contact to dCTP. Residue glutamine 366 participates in dATP binding. Position 366 (glutamine 366) interacts with dCTP. A dTTP-binding site is contributed by glutamine 366. GTP-binding residues include arginine 442, lysine 446, and lysine 515. Lysine 515 serves as a coordination point for dGTP.

Belongs to the SAMHD1 family. Homodimer; in absence of GTP and dNTP. Homotetramer; in GTP- and dNTP-bound form. Interacts with rbbp8/CtIP. Requires Zn(2+) as cofactor.

It localises to the nucleus. The protein localises to the chromosome. It carries out the reaction a 2'-deoxyribonucleoside 5'-triphosphate + H2O = a 2'-deoxyribonucleoside + triphosphate + H(+). The catalysed reaction is dATP + H2O = 2'-deoxyadenosine + triphosphate + H(+). The enzyme catalyses dCTP + H2O = 2'-deoxycytidine + triphosphate + H(+). It catalyses the reaction dGTP + H2O = 2'-deoxyguanosine + triphosphate + H(+). It carries out the reaction dTTP + H2O = thymidine + triphosphate + H(+). With respect to regulation, allosterically activated and regulated via the combined actions of GTP and dNTPs (dATP, dGTP, dTTP and dCTP): Allosteric site 1 binds GTP, while allosteric site 2 binds dNTP. Allosteric activation promotes the formation of highly active homotetramers. Protein that acts both as a host restriction factor involved in defense response to virus and as a regulator of DNA end resection at stalled replication forks. Has deoxynucleoside triphosphate (dNTPase) activity, which is required to restrict infection by viruses: dNTPase activity reduces cellular dNTP levels to levels too low for retroviral reverse transcription to occur, blocking early-stage virus replication in dendritic and other myeloid cells. Functions during S phase at stalled DNA replication forks to promote the resection of gapped or reversed forks: acts by stimulating the exonuclease activity of MRE11, activating the ATR-CHK1 pathway and allowing the forks to restart replication. Its ability to promote degradation of nascent DNA at stalled replication forks is required to prevent induction of type I interferons, thereby preventing chronic inflammation. Ability to promote DNA end resection at stalled replication forks is independent of dNTPase activity. This Gallus gallus (Chicken) protein is Deoxynucleoside triphosphate triphosphohydrolase SAMHD1.